The sequence spans 232 residues: Phosphoglycolate phosphatase (232 aa).

D8 (nucleophile) is an active-site residue. Positions 8 and 10 each coordinate Mg(2+). Position 155 (K155) interacts with substrate. Mg(2+)-binding residues include D178 and D182.

It belongs to the archaeal SPP-like hydrolase family. Requires Mg(2+) as cofactor.

It carries out the reaction 2-phosphoglycolate + H2O = glycolate + phosphate. Catalyzes the dephosphorylation of 2-phosphoglycolate. In Methanospirillum hungatei JF-1 (strain ATCC 27890 / DSM 864 / NBRC 100397 / JF-1), this protein is Phosphoglycolate phosphatase.